Reading from the N-terminus, the 88-residue chain is Apolipoprotein C-I (88 aa).

The signal sequence occupies residues 1–26; it reads MRLFLSLPVLVVVLAMVWEGPAPTQA.

Belongs to the apolipoprotein C1 family.

It localises to the secreted. Its function is as follows. Inhibitor of lipoprotein binding to the low density lipoprotein (LDL) receptor, LDL receptor-related protein, and very low density lipoprotein (VLDL) receptor. Associates with high density lipoproteins (HDL) and the triacylglycerol-rich lipoproteins in the plasma and makes up about 10% of the protein of the VLDL and 2% of that of HDL. Appears to interfere directly with fatty acid uptake and is also the major plasma inhibitor of cholesteryl ester transfer protein (CETP). Binds free fatty acids and reduces their intracellular esterification. Modulates the interaction of APOE with beta-migrating VLDL and inhibits binding of beta-VLDL to the LDL receptor-related protein. The polypeptide is Apolipoprotein C-I (APOC1) (Neomonachus schauinslandi (Hawaiian monk seal)).